Reading from the N-terminus, the 885-residue chain is Glycerol-3-phosphate acyltransferase (885 aa).

A compositionally biased stretch (pro residues) spans 1–17 (MPEQNPLPFPDGQPSPP). The segment at 1–26 (MPEQNPLPFPDGQPSPPSTAAADTGA) is disordered. The HXXXXD motif motif lies at 362 to 367 (HRSHMD).

It belongs to the GPAT/DAPAT family.

It localises to the cell inner membrane. The catalysed reaction is sn-glycerol 3-phosphate + an acyl-CoA = a 1-acyl-sn-glycero-3-phosphate + CoA. Its pathway is phospholipid metabolism; CDP-diacylglycerol biosynthesis; CDP-diacylglycerol from sn-glycerol 3-phosphate: step 1/3. The polypeptide is Glycerol-3-phosphate acyltransferase (Xanthomonas axonopodis pv. citri (strain 306)).